We begin with the raw amino-acid sequence, 206 residues long: Small ribosomal subunit protein uS4 (206 aa).

The S4 RNA-binding domain occupies 96-156 (GRLDNVVYRM…EKSKKQARIK (61 aa)).

Belongs to the universal ribosomal protein uS4 family. As to quaternary structure, part of the 30S ribosomal subunit. Contacts protein S5. The interaction surface between S4 and S5 is involved in control of translational fidelity.

Its function is as follows. One of the primary rRNA binding proteins, it binds directly to 16S rRNA where it nucleates assembly of the body of the 30S subunit. With S5 and S12 plays an important role in translational accuracy. The sequence is that of Small ribosomal subunit protein uS4 from Pasteurella multocida (strain Pm70).